We begin with the raw amino-acid sequence, 23 residues long: Septenin 2d (23 aa).

Expressed in skin glands.

The protein resides in the secreted. Its function is as follows. May act as an antimicrobial peptide. The protein is Septenin 2d of Osteopilus septentrionalis (Cuban treefrog).